We begin with the raw amino-acid sequence, 352 residues long: UPF0324 membrane protein RA0957 (352 aa).

The next 10 membrane-spanning stretches (helical) occupy residues 24-43, 48-67, 104-126, 136-158, 169-191, 201-223, 235-257, 272-294, 301-318, and 328-350; these read VVSY…SAQF, YGAP…NFLS, LGVS…AIIV, LSLL…LNAV, LALT…PVLA, SGVF…FAMS, IVRV…VLGA, GFVL…AAAG, SRWL…KTSV, and HVTL…LLWY.

Belongs to the UPF0324 family.

The protein localises to the cell membrane. This is UPF0324 membrane protein RA0957 from Rhizobium meliloti (strain 1021) (Ensifer meliloti).